We begin with the raw amino-acid sequence, 378 residues long: UDP-N-acetylenolpyruvoylglucosamine reductase (378 aa).

The 171-residue stretch at 15–185 folds into the FAD-binding PCMH-type domain; it reads VGGTPERLLE…LSVDLELADH (171 aa). Residue Arg-163 is part of the active site. Ser-248 serves as the catalytic Proton donor. Residue Glu-370 is part of the active site.

Belongs to the MurB family. It depends on FAD as a cofactor.

It is found in the cytoplasm. It catalyses the reaction UDP-N-acetyl-alpha-D-muramate + NADP(+) = UDP-N-acetyl-3-O-(1-carboxyvinyl)-alpha-D-glucosamine + NADPH + H(+). Its pathway is cell wall biogenesis; peptidoglycan biosynthesis. Functionally, cell wall formation. The sequence is that of UDP-N-acetylenolpyruvoylglucosamine reductase from Leifsonia xyli subsp. xyli (strain CTCB07).